Here is a 243-residue protein sequence, read N- to C-terminus: Orotidine 5'-phosphate decarboxylase (243 aa).

Residues Asp-19, Lys-41, 69–78, Thr-124, Arg-185, Gln-194, Gly-214, and Arg-215 each bind substrate; that span reads DLKFFDIPAT. Catalysis depends on Lys-71, which acts as the Proton donor.

This sequence belongs to the OMP decarboxylase family. Type 1 subfamily. As to quaternary structure, homodimer.

The enzyme catalyses orotidine 5'-phosphate + H(+) = UMP + CO2. It functions in the pathway pyrimidine metabolism; UMP biosynthesis via de novo pathway; UMP from orotate: step 2/2. Its function is as follows. Catalyzes the decarboxylation of orotidine 5'-monophosphate (OMP) to uridine 5'-monophosphate (UMP). The sequence is that of Orotidine 5'-phosphate decarboxylase from Xanthomonas campestris pv. campestris (strain B100).